The sequence spans 393 residues: STE20-related kinase adapter protein alpha (393 aa).

Phosphoserine occurs at positions 2 and 9. The region spanning 32–341 (YELLSVIGKG…ASTLLNHSFF (310 aa)) is the Protein kinase domain. At Thr-381 the chain carries Phosphothreonine; by LKB1.

This sequence belongs to the protein kinase superfamily. STE Ser/Thr protein kinase family. STE20 subfamily. Component of a trimeric complex composed of STK11/LKB1, STRAD (STRADA or STRADB) and CAB39/MO25 (CAB39/MO25alpha or CAB39L/MO25beta): the complex tethers STK11/LKB1 in the cytoplasm and stimulates its catalytic activity. As to expression, expressed in liver.

It is found in the nucleus. The protein resides in the cytoplasm. In terms of biological role, pseudokinase which, in complex with CAB39/MO25 (CAB39/MO25alpha or CAB39L/MO25beta), binds to and activates STK11/LKB1. Adopts a closed conformation typical of active protein kinases and binds STK11/LKB1 as a pseudosubstrate, promoting conformational change of STK11/LKB1 in an active conformation. In Rattus norvegicus (Rat), this protein is STE20-related kinase adapter protein alpha (Strada).